Reading from the N-terminus, the 510-residue chain is ATP synthase subunit alpha (510 aa).

169-176 lines the ATP pocket; sequence GDRQTGKT.

It belongs to the ATPase alpha/beta chains family. As to quaternary structure, F-type ATPases have 2 components, CF(1) - the catalytic core - and CF(0) - the membrane proton channel. CF(1) has five subunits: alpha(3), beta(3), gamma(1), delta(1), epsilon(1). CF(0) has three main subunits: a(1), b(2) and c(9-12). The alpha and beta chains form an alternating ring which encloses part of the gamma chain. CF(1) is attached to CF(0) by a central stalk formed by the gamma and epsilon chains, while a peripheral stalk is formed by the delta and b chains.

The protein localises to the cell inner membrane. It catalyses the reaction ATP + H2O + 4 H(+)(in) = ADP + phosphate + 5 H(+)(out). In terms of biological role, produces ATP from ADP in the presence of a proton gradient across the membrane. The alpha chain is a regulatory subunit. This Afipia carboxidovorans (strain ATCC 49405 / DSM 1227 / KCTC 32145 / OM5) (Oligotropha carboxidovorans) protein is ATP synthase subunit alpha.